The following is a 266-amino-acid chain: Manganese catalase (266 aa).

E35 lines the Mn(2+) pocket. Residues D57 and D61 each coordinate Ca(2+). Mn(2+) contacts are provided by E66, H69, E148, and H181. The Ca(2+) site is built by N218, S220, and G222. Residues 243–266 (ENPEAMGGIPHIKPGDPRLHNHQG) form a disordered region. A compositionally biased stretch (basic and acidic residues) spans 255 to 266 (KPGDPRLHNHQG).

The protein belongs to the manganese catalase family. In terms of assembly, homohexamer. Ca(2+) serves as cofactor. It depends on Mn(2+) as a cofactor.

It catalyses the reaction 2 H2O2 = O2 + 2 H2O. In terms of biological role, catalyzes the decomposition of hydrogen peroxide into water and oxygen. This Lactiplantibacillus plantarum (Lactobacillus plantarum) protein is Manganese catalase.